Consider the following 347-residue polypeptide: Cell division protein FtsQ (347 aa).

The disordered stretch occupies residues 1–55; sequence MARNGNPQFPDERSTATRAKATEPEELDDRFSDLEPEEDSPFLRSQKRVPVRRGP. Over 1–66 the chain is Cytoplasmic; that stretch reads MARNGNPQFP…PSKKAANRVK (66 aa). A compositionally biased stretch (basic and acidic residues) spans 10–33; sequence PDERSTATRAKATEPEELDDRFSD. Residues 67–87 form a helical membrane-spanning segment; sequence IALIVLGVLVVIGGVWMALSA. Over 88–347 the chain is Periplasmic; that stretch reads YGEHSWRFRL…PTAHTSGRRH (260 aa). Residues 98–166 form the POTRA domain; that stretch reads ESSDSIEVGG…DRIRVQVTER (69 aa). The tract at residues 308–347 is disordered; sequence DSHPSAAKPTAPAVAPAVEKPAVAKPAVAKPTAHTSGRRH. The span at 313–340 shows a compositional bias: low complexity; the sequence is AAKPTAPAVAPAVEKPAVAKPAVAKPTA.

Belongs to the FtsQ/DivIB family. FtsQ subfamily.

Its subcellular location is the cell inner membrane. Essential cell division protein. This Koribacter versatilis (strain Ellin345) protein is Cell division protein FtsQ.